Reading from the N-terminus, the 123-residue chain is Class I hydrophobin pri2 (123 aa).

Positions 1–18 (MVAIKSLAILALPVMAMA) are cleaved as a signal peptide. 4 disulfide bridges follow: C31-C102, C38-C96, C39-C84, and C103-C116. N-linked (GlcNAc...) asparagine glycans are attached at residues N33 and N40.

Belongs to the fungal hydrophobin family. As to quaternary structure, self-assembles to form functional amyloid fibrils called rodlets. Self-assembly into fibrillar rodlets occurs spontaneously at hydrophobic:hydrophilic interfaces and the rodlets further associate laterally to form amphipathic monolayers.

It localises to the secreted. It is found in the cell wall. In terms of biological role, aerial growth, conidiation, and dispersal of filamentous fungi in the environment rely upon a capability of their secreting small amphipathic proteins called hydrophobins (HPBs) with low sequence identity. Class I can self-assemble into an outermost layer of rodlet bundles on aerial cell surfaces, conferring cellular hydrophobicity that supports fungal growth, development and dispersal; whereas Class II form highly ordered films at water-air interfaces through intermolecular interactions but contribute nothing to the rodlet structure. This Cyclocybe aegerita (Black poplar mushroom) protein is Class I hydrophobin pri2.